The following is a 576-amino-acid chain: Apolipoprotein N-acyltransferase 1 (576 aa).

Transmembrane regions (helical) follow at residues 15–35 (LILC…FSFF), 38–58 (GVFA…TSIW), 60–80 (AFLW…YWIP), 92–112 (FVSI…FFLF), 128–148 (YILL…FQIF), 168–188 (ICGV…FLIL), and 204–224 (IASL…IGYI). In terms of domain architecture, CN hydrolase spans 236–538 (LSVLMIQPDT…TGTRAFSIRL (303 aa)). Residue glutamate 285 is the Proton acceptor of the active site. Residue lysine 355 is part of the active site. Residue cysteine 446 is the Nucleophile of the active site. The helical transmembrane segment at 549-569 (FGNSFLWIFCILILISRLIFV) threads the bilayer.

It belongs to the CN hydrolase family. Apolipoprotein N-acyltransferase subfamily.

The protein localises to the cell inner membrane. It carries out the reaction N-terminal S-1,2-diacyl-sn-glyceryl-L-cysteinyl-[lipoprotein] + a glycerophospholipid = N-acyl-S-1,2-diacyl-sn-glyceryl-L-cysteinyl-[lipoprotein] + a 2-acyl-sn-glycero-3-phospholipid + H(+). Its pathway is protein modification; lipoprotein biosynthesis (N-acyl transfer). Functionally, catalyzes the phospholipid dependent N-acylation of the N-terminal cysteine of apolipoprotein, the last step in lipoprotein maturation. In Leptospira interrogans serogroup Icterohaemorrhagiae serovar copenhageni (strain Fiocruz L1-130), this protein is Apolipoprotein N-acyltransferase 1.